Here is an 89-residue protein sequence, read N- to C-terminus: Neurotoxin beta-KTx 52.1 (89 aa).

Positions 1-20 (MKQYIFFLALIVLTATFAEA) are cleaved as a signal peptide. Positions 21-39 (GKKTEILDKVKKVFSKAKD) are excised as a propeptide. In terms of domain architecture, BetaSPN-type CS-alpha/beta spans 53 to 89 (ELGCPFIDKWCEDHCDSKKLVGKCENFDCSCVKLGGK). 3 disulfide bridges follow: Cys-56-Cys-76, Cys-63-Cys-81, and Cys-67-Cys-83.

Belongs to the long chain scorpion toxin family. Class 2 subfamily. Expressed by the venom gland.

The protein resides in the secreted. Its function is as follows. Inhibits voltage-gated potassium channel. The sequence is that of Neurotoxin beta-KTx 52.1 from Lychas mucronatus (Chinese swimming scorpion).